Here is a 419-residue protein sequence, read N- to C-terminus: UDP-N-acetylglucosamine 1-carboxyvinyltransferase (419 aa).

Residue Lys-22–Asn-23 participates in phosphoenolpyruvate binding. Residue Arg-91 participates in UDP-N-acetyl-alpha-D-glucosamine binding. Cys-115 functions as the Proton donor in the catalytic mechanism. Cys-115 bears the 2-(S-cysteinyl)pyruvic acid O-phosphothioketal mark. UDP-N-acetyl-alpha-D-glucosamine-binding positions include Arg-120–Leu-124, Lys-160–Val-163, Asp-305, and Val-327.

It belongs to the EPSP synthase family. MurA subfamily.

The protein resides in the cytoplasm. It carries out the reaction phosphoenolpyruvate + UDP-N-acetyl-alpha-D-glucosamine = UDP-N-acetyl-3-O-(1-carboxyvinyl)-alpha-D-glucosamine + phosphate. It participates in cell wall biogenesis; peptidoglycan biosynthesis. Its function is as follows. Cell wall formation. Adds enolpyruvyl to UDP-N-acetylglucosamine. The protein is UDP-N-acetylglucosamine 1-carboxyvinyltransferase of Escherichia fergusonii (strain ATCC 35469 / DSM 13698 / CCUG 18766 / IAM 14443 / JCM 21226 / LMG 7866 / NBRC 102419 / NCTC 12128 / CDC 0568-73).